The primary structure comprises 400 residues: Exodeoxyribonuclease 7 large subunit (400 aa).

The protein belongs to the XseA family. As to quaternary structure, heterooligomer composed of large and small subunits.

Its subcellular location is the cytoplasm. It carries out the reaction Exonucleolytic cleavage in either 5'- to 3'- or 3'- to 5'-direction to yield nucleoside 5'-phosphates.. Its function is as follows. Bidirectionally degrades single-stranded DNA into large acid-insoluble oligonucleotides, which are then degraded further into small acid-soluble oligonucleotides. In Clostridium perfringens (strain ATCC 13124 / DSM 756 / JCM 1290 / NCIMB 6125 / NCTC 8237 / Type A), this protein is Exodeoxyribonuclease 7 large subunit.